The chain runs to 897 residues: Alpha-actinin-2 (897 aa).

The actin-binding stretch occupies residues 1-257 (MNSMNQIETN…IMTYVSCFYH (257 aa)). Calponin-homology (CH) domains lie at 41–145 (KQQR…LRFA) and 154–260 (TSAK…HAFA). 4 Spectrin repeats span residues 284-394 (RLME…WLLN), 404-509 (HLAE…ALER), 519-630 (QLHL…SLQE), and 640-743 (RLRR…EVET). 2 EF-hand domains span residues 756–791 (EQMN…MGYD) and 792–827 (LGEA…ETAD). Aspartate 769, asparagine 773, aspartate 780, aspartate 805, asparagine 807, and threonine 811 together coordinate Ca(2+).

The protein belongs to the alpha-actinin family. In terms of assembly, homodimer; antiparallel. Post-translationally, ubiquitinated by FBXL22, leading to proteasomal degradation.

It localises to the cytoplasm. It is found in the myofibril. The protein resides in the sarcomere. The protein localises to the z line. Functionally, F-actin cross-linking protein which is thought to anchor actin to a variety of intracellular structures. This is a bundling protein. This is Alpha-actinin-2 (ACTN2) from Gallus gallus (Chicken).